Consider the following 108-residue polypeptide: UPF0060 membrane protein YnfA (108 aa).

At 1-5 (MIKTT) the chain is on the periplasmic side. Residues 6–26 (LLFFATALCEIIGCFLPWLWL) form a helical membrane-spanning segment. The Cytoplasmic portion of the chain corresponds to 27 to 30 (KRNA). The helical transmembrane segment at 31-51 (SIWLLLPAGISLALFVWLLTL) threads the bilayer. The Periplasmic segment spans residues 52–60 (HPAASGRVY). Residues 61–81 (AAYGGVYVCTALMWLRVVDGV) form a helical membrane-spanning segment. The Cytoplasmic portion of the chain corresponds to 82–84 (KLS). A helical membrane pass occupies residues 85–105 (LYDWTGALIALCGMLIIVAGW). Over 106–108 (GRT) the chain is Periplasmic.

This sequence belongs to the UPF0060 family.

The protein localises to the cell inner membrane. This Shigella flexneri serotype 5b (strain 8401) protein is UPF0060 membrane protein YnfA.